The chain runs to 491 residues: NADH-quinone oxidoreductase subunit N 1 (491 aa).

A run of 14 helical transmembrane segments spans residues 15 to 35 (VLGMPAFLMIWAMLVLIVDMF), 41 to 61 (VLLTLSLIGLGVTAALGALDY), 77 to 97 (FGVLVNWILLAGTALTLLIAF), 105 to 125 (LSQGEFYPLVLFATSGMLFLV), 130 to 150 (LVTIFIGVETLSIALYVLTGF), 165 to 185 (LLLGGFAAGFLVYGIALIYGM), 211 to 231 (PILLAGVGFVLIALGFKVSMF), 247 to 269 (PVTAYMSVATKGAAFAAMLRFLN), 279 to 299 (WQLLFGLFAAATMAYGNIVAV), 307 to 327 (MLAYSSIAHAGYMLLGVLAAS), 333 to 353 (AFTVYLLAYTLTNLGAFAVLI), 378 to 398 (LALAMTVFMFSLAGVPPTAGF), 416 to 436 (LAIIGVVTSVISAFFYLRVIV), and 459 to 479 (LGVIVAVIGIIAVGILPNIFT).

This sequence belongs to the complex I subunit 2 family. In terms of assembly, NDH-1 is composed of 14 different subunits. Subunits NuoA, H, J, K, L, M, N constitute the membrane sector of the complex.

The protein resides in the cell membrane. The catalysed reaction is a quinone + NADH + 5 H(+)(in) = a quinol + NAD(+) + 4 H(+)(out). Its function is as follows. NDH-1 shuttles electrons from NADH, via FMN and iron-sulfur (Fe-S) centers, to quinones in the respiratory chain. The immediate electron acceptor for the enzyme in this species is believed to be ubiquinone. Couples the redox reaction to proton translocation (for every two electrons transferred, four hydrogen ions are translocated across the cytoplasmic membrane), and thus conserves the redox energy in a proton gradient. This chain is NADH-quinone oxidoreductase subunit N 1, found in Herpetosiphon aurantiacus (strain ATCC 23779 / DSM 785 / 114-95).